The chain runs to 276 residues: MKPFSPSQTNFEKEQLCFGVYQLKDCYQQVIEALSLGIRVIDSAITYRNEKECEQAIQDFCHQNVNIKREDITLITKIPDSLQGFERTWKAVEQSLRRTGRPKLDVVLIHSPKWPVRRIESWRALLQHQKEGRINKIGVSNYNIHHLEEIISLGLPLPAINQVEFSAFNNRPTFLSYCFNHGILVQAFSPLTRGYRLSDIRLLDLSLKYNKTPANILLRYCLQKGVSPIFKASSFVHIHENVKAEQFMLDPSDMDVMDTWDEEFVSKPTWNPIILP.

Y47 functions as the Proton donor in the catalytic mechanism. H110 lines the substrate pocket.

This sequence belongs to the aldo/keto reductase family.

It localises to the cytoplasm. The protein localises to the nucleus. This is an uncharacterized protein from Schizosaccharomyces pombe (strain 972 / ATCC 24843) (Fission yeast).